The following is a 1493-amino-acid chain: Protein RNA-directed DNA methylation 3 (1493 aa).

Disordered regions lie at residues 1-34 (MDRK…EGLR) and 54-96 (GYYG…SSFV). Residues 21–28 (KRKNSVEF) carry the Nuclear localization signal motif. Positions 24-34 (NSVEFRDEGLR) are enriched in basic and acidic residues. Residues 60–80 (SDEDDDGLGFLNDMEDEPEVE) show a composition bias toward acidic residues. Residues 81–92 (ESSKAGKGEKGK) are compositionally biased toward basic and acidic residues. Residues 239-266 (KVSEGTWARVKNGKYKGDLAQIVAVSDT) form the KOW 1 domain. The segment at 393–432 (PTCREGGKGEGSGGGKGEGSGGGKGEGSRGGKGEGSSDFK) is disordered. Over residues 401–417 (GEGSGGGKGEGSGGGKG) the composition is skewed to gly residues. Residues 418–432 (EGSRGGKGEGSSDFK) are compositionally biased toward basic and acidic residues. One can recognise a KOW 2 domain in the interval 501 to 528 (QISVNDVVKISKGPSEGKQGVVRQVYRG). The tract at residues 578 to 602 (SSPKSPLSPEKEWQPRERYNSSNQG) is disordered. Basic and acidic residues predominate over residues 586–596 (PEKEWQPRERY). The 28-residue stretch at 607–634 (TYSIGQKLRIRVGPLKGYLCRVIALRYS) folds into the KOW 3 domain. Disordered stretches follow at residues 692–711 (IGAG…PSTD), 728–747 (EKNP…TVAD), and 757–1493 (AAEN…KTGW). Residues 732–741 (WGGSKPTSDV) form repeat 1. The segment at 732 to 1493 (WGGSKPTSDV…WGTGDKKTGW (762 aa)) is 42 X 9 AA approximate WG/GW-rich tandem repeats. Residues 757-767 (AAENKPASASD) show a composition bias toward low complexity. 37 consecutive repeat copies span residues 775–784 (WGKTPASEAG), 789–797 (WGDTSASNV), 818–827 (WGTHGGSSGG), 836–845 (WGKLCEASES), 854–863 (WGKKGGSDGE), 866–875 (WGNKDGNSSA), 883–892 (WGQQDKGSDE), 917–926 (GWNKSAEDSN), 935–943 (WGQPNDGSS), 944–953 (WGKKGDGAAS), 954–962 (WGKKDDGGS), 963–972 (WGKKDDGNKD), 978–987 (WGKKDDGQKD), 1003–1012 (WGKKDDGGSS), 1013–1022 (WGKKDDGGSL), 1023–1032 (WGKKDDGGSS), 1033–1042 (WGKEDDGGSL), 1043–1052 (WGKKDDGESS), 1053–1062 (WGKKDDGESS), 1063–1072 (WGKKDDGGSS), 1073–1082 (WGKKDEGGYS), 1132–1141 (WGKQDGDGGG), 1144–1153 (WGKENDAGGG), 1156–1165 (WGKQDNGVGS), 1167–1176 (WGKQNDGSGG), 1180–1189 (WGKQNDAGGG), 1192–1201 (WGKQDSGGDG), 1204–1213 (WGKQDGGGDS), 1217–1226 (WGKQNNTSGG), 1229–1238 (WGKQSDAGGG), 1241–1250 (WGKQDGGGGG), 1253–1262 (WGKQDGGGGS), 1266–1275 (WGKQNETSNG), 1278–1287 (WGKQNDSGGG), 1290–1299 (WGKQDGGGGG), 1302–1311 (WGKQNDGGGG), and 1314–1323 (WGKQGDGGSK). The span at 790–812 (GDTSASNVEASSWEKQGASTSNV) shows a compositional bias: polar residues. Positions 846–860 (SQKKEESSWGKKGGS) are enriched in basic and acidic residues. Over residues 866 to 875 (WGNKDGNSSA) the composition is skewed to polar residues. Residues 955–1090 (GKKDDGGSWG…YSEQTFDRGG (136 aa)) are compositionally biased toward basic and acidic residues. Low complexity predominate over residues 1122-1134 (PWSKPSGGSSWGK). Positions 1156-1172 (WGKQDNGVGSSWGKQND) are enriched in polar residues. Positions 1186–1213 (AGGGSSWGKQDSGGDGSSWGKQDGGGDS) are enriched in gly residues. Residues 1218–1231 (GKQNNTSGGSSWGK) show a composition bias toward polar residues. The span at 1235–1264 (AGGGSSWGKQDGGGGGSSWGKQDGGGGSGS) shows a compositional bias: gly residues. Polar residues predominate over residues 1270 to 1283 (NETSNGSSWGKQND). A compositionally biased stretch (gly residues) spans 1284-1321 (SGGGSSWGKQDGGGGGSSWGKQNDGGGGSSWGKQGDGG). 2 stretches are compositionally biased toward polar residues: residues 1366-1382 (WKTD…QSGG) and 1392-1401 (DSNNSKPSGS). Residues 1389 to 1398 (WGEDSNNSKP) form repeat 39. Residues 1416 to 1430 (NSKKETNDKPGDDSK) show a composition bias toward basic and acidic residues. Positions 1432–1442 (AWGTSNDQVNT) are enriched in polar residues. Tandem repeats lie at residues 1433–1442 (WGTSNDQVNT), 1467–1475 (WGGKTNAVA), and 1484–1493 (WGTGDKKTGW).

In terms of assembly, interacts with AGO4 via its C-terminal region and with RNA transcripts. Binds chromatin at loci subject to transcriptional silencing downstream of RNA Polymerase V, but independently from the presence of 24-nt siRNA.

The protein localises to the nucleus. It is found in the nucleoplasm. Functionally, effector of RNA-directed DNA methylation (RdDM) triggered by small interfering RNAs (siRNAs, 24-nt RNAs). Functions as an adapter protein that binds scaffold transcripts generated by polymerase V and recruits AGO4 and AGO4-bound siRNAs to form an RdDM effector complex. Promotes the expression of 24-nt RNAs. Required for the initial establishment of DNA methylation. Together with AGO4, required for transcriptional gene silencing (TGS) by DNA methylation and repressive histone modifications (H3K9me2) of several chromatin loci. In Arabidopsis thaliana (Mouse-ear cress), this protein is Protein RNA-directed DNA methylation 3.